The primary structure comprises 454 residues: Bifunctional protein GlmU (454 aa).

Positions 1–228 (MTLPLHVVIL…PQDVEGANDP (228 aa)) are pyrophosphorylase. UDP-N-acetyl-alpha-D-glucosamine is bound by residues 10–13 (LAAG), Lys-24, Gln-76, 81–82 (GT), 103–105 (YGD), Gly-138, Glu-153, Asn-168, and Asn-226. Asp-105 serves as a coordination point for Mg(2+). Asn-226 lines the Mg(2+) pocket. The linker stretch occupies residues 229–249 (WQLAQLERAWQLRAARALSLQ). The tract at residues 250–454 (GVRMADPARV…IEGWERPTKK (205 aa)) is N-acetyltransferase. Residues Arg-332 and Lys-350 each contribute to the UDP-N-acetyl-alpha-D-glucosamine site. His-362 acts as the Proton acceptor in catalysis. Positions 365 and 376 each coordinate UDP-N-acetyl-alpha-D-glucosamine. Acetyl-CoA contacts are provided by residues Ala-379, 385-386 (NY), Ser-404, Ala-422, and Arg-439.

In the N-terminal section; belongs to the N-acetylglucosamine-1-phosphate uridyltransferase family. This sequence in the C-terminal section; belongs to the transferase hexapeptide repeat family. Homotrimer. Mg(2+) serves as cofactor.

Its subcellular location is the cytoplasm. The catalysed reaction is alpha-D-glucosamine 1-phosphate + acetyl-CoA = N-acetyl-alpha-D-glucosamine 1-phosphate + CoA + H(+). The enzyme catalyses N-acetyl-alpha-D-glucosamine 1-phosphate + UTP + H(+) = UDP-N-acetyl-alpha-D-glucosamine + diphosphate. The protein operates within nucleotide-sugar biosynthesis; UDP-N-acetyl-alpha-D-glucosamine biosynthesis; N-acetyl-alpha-D-glucosamine 1-phosphate from alpha-D-glucosamine 6-phosphate (route II): step 2/2. It functions in the pathway nucleotide-sugar biosynthesis; UDP-N-acetyl-alpha-D-glucosamine biosynthesis; UDP-N-acetyl-alpha-D-glucosamine from N-acetyl-alpha-D-glucosamine 1-phosphate: step 1/1. Its pathway is bacterial outer membrane biogenesis; LPS lipid A biosynthesis. Catalyzes the last two sequential reactions in the de novo biosynthetic pathway for UDP-N-acetylglucosamine (UDP-GlcNAc). The C-terminal domain catalyzes the transfer of acetyl group from acetyl coenzyme A to glucosamine-1-phosphate (GlcN-1-P) to produce N-acetylglucosamine-1-phosphate (GlcNAc-1-P), which is converted into UDP-GlcNAc by the transfer of uridine 5-monophosphate (from uridine 5-triphosphate), a reaction catalyzed by the N-terminal domain. The sequence is that of Bifunctional protein GlmU from Xanthomonas oryzae pv. oryzae (strain MAFF 311018).